The primary structure comprises 564 residues: Solute carrier family 22 member 21 (564 aa).

At 1–20 (MLDYDEVTAFLGEWGTFQRL) the chain is on the cytoplasmic side. Residues 21–41 (IFFLLSASIIPNGFTGLSAVF) form a helical membrane-spanning segment. Over 42 to 142 (LTAIPEHRCR…DLVCKDDWKA (101 aa)) the chain is Extracellular. 3 N-linked (GlcNAc...) asparagine glycosylation sites follow: asparagine 57, asparagine 64, and asparagine 91. A helical transmembrane segment spans residues 143–163 (PLTTSFFYVGVLLGSFISGQL). The Cytoplasmic segment spans residues 164-172 (SDRFGRKNI). The helical transmembrane segment at 173–193 (LFLTMAMHTGFSFIQVFSVNF) threads the bilayer. Over 194 to 197 (EMFT) the chain is Extracellular. A helical membrane pass occupies residues 198-218 (LLYTLVGMGHISNYVAAFVLG). Residue 218 to 225 (GTEMLSKS) coordinates ATP. The Cytoplasmic portion of the chain corresponds to 219-232 (TEMLSKSVRIIFAT). A helical membrane pass occupies residues 233-253 (LGVCIFFAFGFMVLPLFAYFI). Residues 254–257 (REWR) are Extracellular-facing. Residues 258–278 (RLLLAITLPGVLCGALWWFIP) form a helical membrane-spanning segment. The Cytoplasmic segment spans residues 279–344 (ESPRWLISQG…YDLVRTPNIR (66 aa)). A helical membrane pass occupies residues 345–365 (ILTIMSIILWLTISVGYFGLS). Topologically, residues 366–376 (LDTPNLNGNIY) are extracellular. The helical transmembrane segment at 377–397 (VNCFLLAAVEVPAYVLAWLLL) threads the bilayer. Over 398–409 (QHVSRRYSMAGS) the chain is Cytoplasmic. A helical membrane pass occupies residues 410-430 (LFLGGSVLLLVQLVPSDLHYL). Residues 431-433 (STT) lie on the Extracellular side of the membrane. The chain crosses the membrane as a helical span at residues 434–454 (LVMVGKFGITSAYSMVYVYTA). Over 455–465 (ELYPTVVRNMG) the chain is Cytoplasmic. A helical membrane pass occupies residues 466 to 486 (VGVSSTASRLGSILSPYFVYL). At 487 to 491 (GAYDR) the chain is on the extracellular side. Residues 492 to 512 (RLPYILMGSLTILTAIITLFF) form a helical membrane-spanning segment. Residues 513–564 (PESSGVSLPETIDEMQKVKKLKQRQSLSKKGSPKESKGNVSRTSRTSEPKGF) lie on the Cytoplasmic side of the membrane. The disordered stretch occupies residues 532–564 (KLKQRQSLSKKGSPKESKGNVSRTSRTSEPKGF).

This sequence belongs to the major facilitator (TC 2.A.1) superfamily. Organic cation transporter (TC 2.A.1.19) family. As to expression, predominantly expressed in testis.

It is found in the peroxisome membrane. Sodium-ion independent, medium affinity carnitine transporter. Also transports organic cations such as tetraethylammonium (TEA) without the involvement of sodium. Relative uptake activity ratio of carnitine to TEA is 746. The protein is Solute carrier family 22 member 21 (Slc22a21) of Mus musculus (Mouse).